A 605-amino-acid chain; its full sequence is Aspartate--tRNA(Asp/Asn) ligase (605 aa).

Glutamate 178 is a binding site for L-aspartate. The segment at 202–205 is aspartate; the sequence is QLFK. Arginine 224 serves as a coordination point for L-aspartate. ATP contacts are provided by residues 224 to 226 and glutamine 233; that span reads RDE. Histidine 458 serves as a coordination point for L-aspartate. Glutamate 488 lines the ATP pocket. Arginine 495 provides a ligand contact to L-aspartate. Residue 540 to 543 participates in ATP binding; that stretch reads GLDR. The segment at 580 to 605 is disordered; sequence QQLKELHVTPAKPAKTTAKTKPRPAD.

It belongs to the class-II aminoacyl-tRNA synthetase family. Type 1 subfamily. Homodimer.

The protein localises to the cytoplasm. It carries out the reaction tRNA(Asx) + L-aspartate + ATP = L-aspartyl-tRNA(Asx) + AMP + diphosphate. Its function is as follows. Aspartyl-tRNA synthetase with relaxed tRNA specificity since it is able to aspartylate not only its cognate tRNA(Asp) but also tRNA(Asn). Reaction proceeds in two steps: L-aspartate is first activated by ATP to form Asp-AMP and then transferred to the acceptor end of tRNA(Asp/Asn). This chain is Aspartate--tRNA(Asp/Asn) ligase, found in Thermosynechococcus vestitus (strain NIES-2133 / IAM M-273 / BP-1).